Here is a 341-residue protein sequence, read N- to C-terminus: MSYLMMDLAGLTVSATETAQLQHPQVGGIILFSRNCENKNQLIELVKSVRSIRPELLIAVDHEGGRVQRFREGFSLIPAMGDILPAAKGDLTLAKQWAKECGFLMAVELLACDIDLSFAPVLDVNGISEVIGKRSFSAVPDEVSALAQQFIIGMNEAGMAAVGKHFPGHGSVAADSHIAMPVDPRTKEQVEAFDMQPFKHLIGSQQLQGVMPAHVVYSNIDPNPAGFSSYWLQTILRQQLGFDGVIFSDDLGMKGASFAGNYLGRAKAALDAGCDMILVCNDSVGVNALLTEFDWPAAEPTHTALSLKGNTAQASQALEQQTRWQAAQLLAMDITRIAQSL.

Residues Asp-61, Arg-69, Arg-134, and Lys-164–His-165 contribute to the substrate site. Catalysis depends on His-177, which acts as the Proton donor/acceptor. The active-site Nucleophile is the Asp-249.

This sequence belongs to the glycosyl hydrolase 3 family. NagZ subfamily.

It localises to the cytoplasm. It carries out the reaction Hydrolysis of terminal non-reducing N-acetyl-D-hexosamine residues in N-acetyl-beta-D-hexosaminides.. The protein operates within cell wall biogenesis; peptidoglycan recycling. In terms of biological role, plays a role in peptidoglycan recycling by cleaving the terminal beta-1,4-linked N-acetylglucosamine (GlcNAc) from peptide-linked peptidoglycan fragments, giving rise to free GlcNAc, anhydro-N-acetylmuramic acid and anhydro-N-acetylmuramic acid-linked peptides. The sequence is that of Beta-hexosaminidase from Shewanella frigidimarina (strain NCIMB 400).